A 268-amino-acid polypeptide reads, in one-letter code: Mitochondrial distribution and morphology protein 12 (268 aa).

Residues 1–256 (MSFEINWQDL…WPSWINLDFN (256 aa)) enclose the SMP-LTD domain. The tract at residues 75 to 94 (LPKDKIPEESDSGCQSADGE) is disordered.

The protein belongs to the MDM12 family. Component of the ER-mitochondria encounter structure (ERMES) or MDM complex, composed of MMM1, MDM10, MDM12 and MDM34. An MMM1 homodimer associates with one molecule of MDM12 on each side in a pairwise head-to-tail manner, and the SMP-LTD domains of MMM1 and MDM12 generate a continuous hydrophobic tunnel for phospholipid trafficking.

The protein localises to the mitochondrion outer membrane. It is found in the endoplasmic reticulum membrane. In terms of biological role, component of the ERMES/MDM complex, which serves as a molecular tether to connect the endoplasmic reticulum (ER) and mitochondria. Components of this complex are involved in the control of mitochondrial shape and protein biogenesis, and function in nonvesicular lipid trafficking between the ER and mitochondria. MDM12 is required for the interaction of the ER-resident membrane protein MMM1 and the outer mitochondrial membrane-resident beta-barrel protein MDM10. The MDM12-MMM1 subcomplex functions in the major beta-barrel assembly pathway that is responsible for biogenesis of all mitochondrial outer membrane beta-barrel proteins, and acts in a late step after the SAM complex. The MDM10-MDM12-MMM1 subcomplex further acts in the TOM40-specific pathway after the action of the MDM12-MMM1 complex. Essential for establishing and maintaining the structure of mitochondria and maintenance of mtDNA nucleoids. The protein is Mitochondrial distribution and morphology protein 12 of Lachancea thermotolerans (strain ATCC 56472 / CBS 6340 / NRRL Y-8284) (Yeast).